The following is a 650-amino-acid chain: Chaperone protein DnaK (650 aa).

Residue Thr-200 is modified to Phosphothreonine; by autocatalysis.

This sequence belongs to the heat shock protein 70 family.

In terms of biological role, acts as a chaperone. This Paraburkholderia phytofirmans (strain DSM 17436 / LMG 22146 / PsJN) (Burkholderia phytofirmans) protein is Chaperone protein DnaK.